The primary structure comprises 328 residues: MKLFWVDLRPWRKDLATTAIESGADALVVEDAERVRKLGRVTAIAENGDLVPGKDVFEIEIVDKESEEEALRLSREGLVIVRTGDWTVIPLENLVAQSDRIVAAVGNADEAKVALTVLERGTAGILLATDDPAEVRRVAKTIAGAGASVPLVPFEVTRIVPVGMGDRVCVDTCSILADGEGMLVGNTSSAFLMVHPETLENPYVAPRPFRVNAGAVHAYILLPGGKTAYLADLAVGDRVLVAEHTGPTHDAVVGRVKIERRPLLLVEAKAGDATVSLVLQNAETIRLVREDGTAVSVAALTVGDRVLGSVAEGGRHFGVAVKETILEK.

It belongs to the archaeal-type DHQ synthase family.

The catalysed reaction is 2-amino-2,3,7-trideoxy-D-lyxo-hept-6-ulosonate + NAD(+) + H2O = 3-dehydroquinate + NH4(+) + NADH + H(+). Catalyzes the oxidative deamination and cyclization of 2-amino-3,7-dideoxy-D-threo-hept-6-ulosonic acid (ADH) to yield 3-dehydroquinate (DHQ), which is fed into the canonical shikimic pathway of aromatic amino acid biosynthesis. This Methanoculleus marisnigri (strain ATCC 35101 / DSM 1498 / JR1) protein is 3-dehydroquinate synthase.